Reading from the N-terminus, the 152-residue chain is Deoxyuridine 5'-triphosphate nucleotidohydrolase (152 aa).

Substrate is bound by residues 71–73 (RSG), Asn-84, 88–90 (LVD), and Met-98.

Belongs to the dUTPase family. Mg(2+) serves as cofactor.

The catalysed reaction is dUTP + H2O = dUMP + diphosphate + H(+). Its pathway is pyrimidine metabolism; dUMP biosynthesis; dUMP from dCTP (dUTP route): step 2/2. Functionally, this enzyme is involved in nucleotide metabolism: it produces dUMP, the immediate precursor of thymidine nucleotides and it decreases the intracellular concentration of dUTP so that uracil cannot be incorporated into DNA. The chain is Deoxyuridine 5'-triphosphate nucleotidohydrolase from Shewanella oneidensis (strain ATCC 700550 / JCM 31522 / CIP 106686 / LMG 19005 / NCIMB 14063 / MR-1).